The following is a 290-amino-acid chain: 6-phospho-5-dehydro-2-deoxy-D-gluconate aldolase (290 aa).

Catalysis depends on aspartate 85, which acts as the Proton donor. Histidine 86 and histidine 180 together coordinate Zn(2+). Residue glycine 181 coordinates dihydroxyacetone phosphate. A Zn(2+)-binding site is contributed by histidine 208. Dihydroxyacetone phosphate-binding positions include 209–211 and 230–233; these read GAS and NINT. Position 233 is a phosphothreonine (threonine 233).

It belongs to the class II fructose-bisphosphate aldolase family. IolJ subfamily. It depends on Zn(2+) as a cofactor.

It carries out the reaction 6-phospho-5-dehydro-2-deoxy-D-gluconate = 3-oxopropanoate + dihydroxyacetone phosphate. It functions in the pathway polyol metabolism; myo-inositol degradation into acetyl-CoA; acetyl-CoA from myo-inositol: step 6/7. In terms of biological role, produces dihydroxyacetone phosphate (DHAP or glycerone phosphate) and malonic semialdehyde (MSA or 3-oxopropanoate) from 6-phospho-5-dehydro-2-deoxy-D-gluconate (DKGP). This chain is 6-phospho-5-dehydro-2-deoxy-D-gluconate aldolase (iolJ), found in Bacillus subtilis (strain 168).